The following is a 407-amino-acid chain: Imidazolonepropionase (407 aa).

Fe(3+) contacts are provided by His-74 and His-76. The Zn(2+) site is built by His-74 and His-76. The 4-imidazolone-5-propanoate site is built by Arg-83, Tyr-146, and His-179. Residue Tyr-146 participates in N-formimidoyl-L-glutamate binding. Position 244 (His-244) interacts with Fe(3+). His-244 is a Zn(2+) binding site. Gln-247 contributes to the 4-imidazolone-5-propanoate binding site. Asp-319 is a Fe(3+) binding site. Residue Asp-319 participates in Zn(2+) binding. N-formimidoyl-L-glutamate contacts are provided by Asn-321 and Gly-323. Thr-324 contributes to the 4-imidazolone-5-propanoate binding site.

Belongs to the metallo-dependent hydrolases superfamily. HutI family. It depends on Zn(2+) as a cofactor. Requires Fe(3+) as cofactor.

The protein localises to the cytoplasm. The enzyme catalyses 4-imidazolone-5-propanoate + H2O = N-formimidoyl-L-glutamate. The protein operates within amino-acid degradation; L-histidine degradation into L-glutamate; N-formimidoyl-L-glutamate from L-histidine: step 3/3. Catalyzes the hydrolytic cleavage of the carbon-nitrogen bond in imidazolone-5-propanoate to yield N-formimidoyl-L-glutamate. It is the third step in the universal histidine degradation pathway. This Salmonella enteritidis PT4 (strain P125109) protein is Imidazolonepropionase.